The primary structure comprises 338 residues: 1-aminocyclopropane-1-carboxylate deaminase (338 aa).

N6-(pyridoxal phosphate)lysine is present on K51. S78 (nucleophile) is an active-site residue.

The protein belongs to the ACC deaminase/D-cysteine desulfhydrase family. Homotrimer. Pyridoxal 5'-phosphate is required as a cofactor.

It carries out the reaction 1-aminocyclopropane-1-carboxylate + H2O = 2-oxobutanoate + NH4(+). Catalyzes a cyclopropane ring-opening reaction, the irreversible conversion of 1-aminocyclopropane-1-carboxylate (ACC) to ammonia and alpha-ketobutyrate. Allows growth on ACC as a nitrogen source. The polypeptide is 1-aminocyclopropane-1-carboxylate deaminase (Pseudomonas syringae pv. tomato (strain ATCC BAA-871 / DC3000)).